A 591-amino-acid chain; its full sequence is Aspartate--tRNA ligase (591 aa).

Glutamate 176 lines the L-aspartate pocket. Residues 200-203 (QILK) are aspartate. Arginine 222 is an L-aspartate binding site. Residues 222 to 224 (RDE) and glutamine 231 each bind ATP. Histidine 450 is a binding site for L-aspartate. Position 484 (glutamate 484) interacts with ATP. Position 491 (arginine 491) interacts with L-aspartate. Residue 536–539 (GLDR) coordinates ATP.

This sequence belongs to the class-II aminoacyl-tRNA synthetase family. Type 1 subfamily. Homodimer.

It is found in the cytoplasm. It carries out the reaction tRNA(Asp) + L-aspartate + ATP = L-aspartyl-tRNA(Asp) + AMP + diphosphate. Functionally, catalyzes the attachment of L-aspartate to tRNA(Asp) in a two-step reaction: L-aspartate is first activated by ATP to form Asp-AMP and then transferred to the acceptor end of tRNA(Asp). In Listeria monocytogenes serotype 4a (strain HCC23), this protein is Aspartate--tRNA ligase.